A 396-amino-acid polypeptide reads, in one-letter code: Zinc metalloproteinase nas-19 (396 aa).

A signal peptide spans 1-20; that stretch reads MVRLIHLIGAIILLFSYAYC. One can recognise a Peptidase M12A domain in the interval 38–231; that stretch reads RVKRQFERLG…YKINQYYGCW (194 aa). Asn-79 is a glycosylation site (N-linked (GlcNAc...) asparagine). Intrachain disulfides connect Cys-82-Cys-230, Cys-105-Cys-130, Cys-232-Cys-252, and Cys-254-Cys-263. A Zn(2+)-binding site is contributed by His-138. Residue Glu-139 is part of the active site. 2 residues coordinate Zn(2+): His-142 and His-148. Residues 225–264 enclose the EGF-like domain; it reads NQYYGCWCSKQLECKNGGYTSPSDCSRCNCPKGFFGNLCD. The N-linked (GlcNAc...) asparagine glycan is linked to Asn-310.

It depends on Zn(2+) as a cofactor.

The protein localises to the secreted. Metalloprotease. This is Zinc metalloproteinase nas-19 (nas-19) from Caenorhabditis elegans.